Reading from the N-terminus, the 480-residue chain is Glutamyl-tRNA(Gln) amidotransferase subunit A (480 aa).

Active-site charge relay system residues include Lys-79 and Ser-154. A disordered region spans residues 133–156 (NENSAYGPVRNPRDKSRVPGGSSG). Ser-178 serves as the catalytic Acyl-ester intermediate.

Belongs to the amidase family. GatA subfamily. As to quaternary structure, heterotrimer of A, B and C subunits.

The catalysed reaction is L-glutamyl-tRNA(Gln) + L-glutamine + ATP + H2O = L-glutaminyl-tRNA(Gln) + L-glutamate + ADP + phosphate + H(+). Its function is as follows. Allows the formation of correctly charged Gln-tRNA(Gln) through the transamidation of misacylated Glu-tRNA(Gln) in organisms which lack glutaminyl-tRNA synthetase. The reaction takes place in the presence of glutamine and ATP through an activated gamma-phospho-Glu-tRNA(Gln). The polypeptide is Glutamyl-tRNA(Gln) amidotransferase subunit A (Koribacter versatilis (strain Ellin345)).